Here is a 158-residue protein sequence, read N- to C-terminus: MADPARARRLAKRIGAIVASAIEYEIKDPRLTMVTVTDTRVTNDLHDATVYYTVMGQTLSDEPDFAGAAAALDKAKGVLRTKVGAGTGVRFTPTLTFVLDTMADSARHMEELLDRTRAADAALAEVRQGAVHAGDADPYKESAAEEPAAYEDDERRPD.

A disordered region spans residues 127–158 (RQGAVHAGDADPYKESAAEEPAAYEDDERRPD). The span at 134-143 (GDADPYKESA) shows a compositional bias: basic and acidic residues.

Belongs to the RbfA family. In terms of assembly, monomer. Binds 30S ribosomal subunits, but not 50S ribosomal subunits or 70S ribosomes.

It localises to the cytoplasm. One of several proteins that assist in the late maturation steps of the functional core of the 30S ribosomal subunit. Associates with free 30S ribosomal subunits (but not with 30S subunits that are part of 70S ribosomes or polysomes). Required for efficient processing of 16S rRNA. May interact with the 5'-terminal helix region of 16S rRNA. The polypeptide is Ribosome-binding factor A (Mycobacteroides abscessus (strain ATCC 19977 / DSM 44196 / CCUG 20993 / CIP 104536 / JCM 13569 / NCTC 13031 / TMC 1543 / L948) (Mycobacterium abscessus)).